Here is a 75-residue protein sequence, read N- to C-terminus: Small ribosomal subunit protein bS18 (75 aa).

This sequence belongs to the bacterial ribosomal protein bS18 family. In terms of assembly, part of the 30S ribosomal subunit. Forms a tight heterodimer with protein bS6.

In terms of biological role, binds as a heterodimer with protein bS6 to the central domain of the 16S rRNA, where it helps stabilize the platform of the 30S subunit. The sequence is that of Small ribosomal subunit protein bS18 from Clostridioides difficile (strain 630) (Peptoclostridium difficile).